A 382-amino-acid polypeptide reads, in one-letter code: FK506-binding protein 4 (382 aa).

Positions 139 to 274 are disordered; sequence GLEVDEEIES…KEEPKKKITK (136 aa). Residues 141–173 show a composition bias toward acidic residues; that stretch reads EVDEEIESDEEVESDEEIESDEEIESEEEEEEP. Basic and acidic residues-rich tracts occupy residues 180–190 and 196–270; these read RPAEEVKEIAS and EKKE…EPKK. One can recognise a PPIase FKBP-type domain in the interval 295–382; it reads GQRVGMRYIG…VFDVKLLSMK (88 aa).

Belongs to the FKBP-type PPIase family. FKBP3/4 subfamily. Binds to histones H3 and H4.

The protein localises to the nucleus. It catalyses the reaction [protein]-peptidylproline (omega=180) = [protein]-peptidylproline (omega=0). With respect to regulation, inhibited by both FK506 and rapamycin. Functionally, PPIase that acts as a histone chaperone. Histone proline isomerase that increases the rate of cis-trans isomerization at prolines on the histone H3 N-terminal tail. Proline isomerization influences H3 methylation thereby regulating gene expression. The chain is FK506-binding protein 4 (FKBP4) from Rhizopus delemar (strain RA 99-880 / ATCC MYA-4621 / FGSC 9543 / NRRL 43880) (Mucormycosis agent).